Reading from the N-terminus, the 456-residue chain is tRNA modification GTPase MnmE (456 aa).

3 residues coordinate (6S)-5-formyl-5,6,7,8-tetrahydrofolate: Arg-24, Glu-81, and Lys-120. The 164-residue stretch at 216–379 (GMTVVIAGRP…LREHLKACMG (164 aa)) folds into the TrmE-type G domain. Asn-226 is a K(+) binding site. GTP is bound by residues 226–231 (NAGKSS), 245–251 (TEIAGTT), 270–273 (DTAG), 335–338 (NKAD), and 359–361 (SAR). Ser-230 contributes to the Mg(2+) binding site. K(+)-binding residues include Thr-245, Ile-247, and Thr-250. Thr-251 is a Mg(2+) binding site. Lys-456 contacts (6S)-5-formyl-5,6,7,8-tetrahydrofolate.

Belongs to the TRAFAC class TrmE-Era-EngA-EngB-Septin-like GTPase superfamily. TrmE GTPase family. Homodimer. Heterotetramer of two MnmE and two MnmG subunits. It depends on K(+) as a cofactor.

It is found in the cytoplasm. In terms of biological role, exhibits a very high intrinsic GTPase hydrolysis rate. Involved in the addition of a carboxymethylaminomethyl (cmnm) group at the wobble position (U34) of certain tRNAs, forming tRNA-cmnm(5)s(2)U34. This is tRNA modification GTPase MnmE from Pseudomonas syringae pv. tomato (strain ATCC BAA-871 / DC3000).